A 194-amino-acid polypeptide reads, in one-letter code: Holliday junction branch migration complex subunit RuvA (194 aa).

The tract at residues 1-63 (MFEYMKGMIV…EDEAHLYGFV (63 aa)) is domain I. Positions 64 to 142 (DKEELAMFKK…DSQVEYDQNF (79 aa)) are domain II. A flexible linker region spans residues 143-146 (FNHE). The domain III stretch occupies residues 146-194 (ENKNNNEVVDALMALGYTKHEGEQAASAVRDTSLSTEEMIRKALNWLAR).

This sequence belongs to the RuvA family. As to quaternary structure, homotetramer. Forms an RuvA(8)-RuvB(12)-Holliday junction (HJ) complex. HJ DNA is sandwiched between 2 RuvA tetramers; dsDNA enters through RuvA and exits via RuvB. An RuvB hexamer assembles on each DNA strand where it exits the tetramer. Each RuvB hexamer is contacted by two RuvA subunits (via domain III) on 2 adjacent RuvB subunits; this complex drives branch migration. In the full resolvosome a probable DNA-RuvA(4)-RuvB(12)-RuvC(2) complex forms which resolves the HJ.

It localises to the cytoplasm. Its function is as follows. The RuvA-RuvB-RuvC complex processes Holliday junction (HJ) DNA during genetic recombination and DNA repair, while the RuvA-RuvB complex plays an important role in the rescue of blocked DNA replication forks via replication fork reversal (RFR). RuvA specifically binds to HJ cruciform DNA, conferring on it an open structure. The RuvB hexamer acts as an ATP-dependent pump, pulling dsDNA into and through the RuvAB complex. HJ branch migration allows RuvC to scan DNA until it finds its consensus sequence, where it cleaves and resolves the cruciform DNA. The chain is Holliday junction branch migration complex subunit RuvA from Alkaliphilus metalliredigens (strain QYMF).